The chain runs to 162 residues: Cyclic pyranopterin monophosphate synthase (162 aa).

Residues 75–77 and 113–114 each bind substrate; these read LCH and ME. Aspartate 128 is an active-site residue.

This sequence belongs to the MoaC family. As to quaternary structure, homohexamer; trimer of dimers.

It carries out the reaction (8S)-3',8-cyclo-7,8-dihydroguanosine 5'-triphosphate = cyclic pyranopterin phosphate + diphosphate. It participates in cofactor biosynthesis; molybdopterin biosynthesis. Functionally, catalyzes the conversion of (8S)-3',8-cyclo-7,8-dihydroguanosine 5'-triphosphate to cyclic pyranopterin monophosphate (cPMP). The sequence is that of Cyclic pyranopterin monophosphate synthase from Burkholderia cenocepacia (strain HI2424).